Here is a 339-residue protein sequence, read N- to C-terminus: DNA-directed RNA polymerase subunit alpha (339 aa).

Positions M1 to E233 are alpha N-terminal domain (alpha-NTD). The tract at residues K264 to F339 is alpha C-terminal domain (alpha-CTD).

It belongs to the RNA polymerase alpha chain family. In plastids the minimal PEP RNA polymerase catalytic core is composed of four subunits: alpha, beta, beta', and beta''. When a (nuclear-encoded) sigma factor is associated with the core the holoenzyme is formed, which can initiate transcription.

Its subcellular location is the plastid. The protein localises to the chloroplast. It catalyses the reaction RNA(n) + a ribonucleoside 5'-triphosphate = RNA(n+1) + diphosphate. Functionally, DNA-dependent RNA polymerase catalyzes the transcription of DNA into RNA using the four ribonucleoside triphosphates as substrates. The chain is DNA-directed RNA polymerase subunit alpha from Bromus inermis (Smooth brome grass).